The sequence spans 468 residues: Interstitial collagenase (468 aa).

Residues 1–18 form the signal peptide; that stretch reads MPGLPLLLLLLWGVGSHG. Positions 19–98 are cleaved as a propeptide — activation peptide; the sequence is FPAASETQEQ…PRCGVPDVAQ (80 aa). Positions 89 to 96 match the Cysteine switch motif; the sequence is PRCGVPDV. Cys-91 contributes to the Zn(2+) binding site. A glycan (N-linked (GlcNAc...) asparagine) is linked at Asn-119. 2 residues coordinate Ca(2+): Asp-123 and Asp-157. Positions 167 and 169 each coordinate Zn(2+). Positions 174, 175, 177, and 179 each coordinate Ca(2+). His-182 contacts Zn(2+). 3 residues coordinate Ca(2+): Gly-189, Gly-191, and Asp-193. His-195 contributes to the Zn(2+) binding site. Ca(2+) is bound by residues Asp-197, Glu-198, and Asp-200. His-217 is a binding site for Zn(2+). Residue Glu-218 is part of the active site. The Zn(2+) site is built by His-221 and His-227. Thr-273 is modified (phosphothreonine). Hemopexin repeat units follow at residues 274 to 323, 324 to 370, 373 to 421, and 422 to 465; these read PKVC…WPHL, PNGL…FGFP, VNHI…FPGI, and GNKV…WFNC. Cys-277 and Cys-465 are oxidised to a cystine. Ca(2+)-binding residues include Asp-284 and Gln-328. Tyr-359 is subject to Phosphotyrosine; by PKDCC. Ca(2+) contacts are provided by Asp-377 and Asp-426.

It belongs to the peptidase M10A family. The cofactor is Ca(2+). Requires Zn(2+) as cofactor. Post-translationally, tyrosine phosphorylated in platelets by PKDCC/VLK.

The protein resides in the secreted. The protein localises to the extracellular space. It localises to the extracellular matrix. It carries out the reaction Cleavage of the triple helix of collagen at about three-quarters of the length of the molecule from the N-terminus, at 775-Gly-|-Ile-776 in the alpha1(I) chain. Cleaves synthetic substrates and alpha-macroglobulins at bonds where P1' is a hydrophobic residue.. Can be activated without removal of the activation peptide. In terms of biological role, cleaves collagens of types I, II, and III at one site in the helical domain. Also cleaves collagens of types VII and X. The chain is Interstitial collagenase (MMP1) from Oryctolagus cuniculus (Rabbit).